The chain runs to 139 residues: Actin-depolymerizing factor 1 (139 aa).

The region spanning Ala-5–Asn-139 is the ADF-H domain.

This sequence belongs to the actin-binding proteins ADF family.

Actin-depolymerizing protein. Severs actin filaments (F-actin) and binds to actin monomers. This chain is Actin-depolymerizing factor 1 (ADF1), found in Petunia hybrida (Petunia).